Consider the following 329-residue polypeptide: Glycerol-3-phosphate dehydrogenase [NAD(P)+] (329 aa).

Serine 10, tryptophan 11, arginine 31, and lysine 105 together coordinate NADPH. Positions 105, 134, and 136 each coordinate sn-glycerol 3-phosphate. Alanine 138 is a binding site for NADPH. The sn-glycerol 3-phosphate site is built by lysine 189, aspartate 242, serine 252, arginine 253, and asparagine 254. Lysine 189 (proton acceptor) is an active-site residue. Residue arginine 253 coordinates NADPH. Positions 277 and 279 each coordinate NADPH.

This sequence belongs to the NAD-dependent glycerol-3-phosphate dehydrogenase family.

The protein resides in the cytoplasm. The catalysed reaction is sn-glycerol 3-phosphate + NAD(+) = dihydroxyacetone phosphate + NADH + H(+). It catalyses the reaction sn-glycerol 3-phosphate + NADP(+) = dihydroxyacetone phosphate + NADPH + H(+). Its pathway is membrane lipid metabolism; glycerophospholipid metabolism. Catalyzes the reduction of the glycolytic intermediate dihydroxyacetone phosphate (DHAP) to sn-glycerol 3-phosphate (G3P), the key precursor for phospholipid synthesis. The protein is Glycerol-3-phosphate dehydrogenase [NAD(P)+] of Neisseria meningitidis serogroup C (strain 053442).